The following is a 595-amino-acid chain: Actin-histidine N-methyltransferase (595 aa).

A disordered region spans residues 1–22; sequence MGKKSRVKTQKSGTGATATVSP. The segment covering 10-20 has biased composition (polar residues); the sequence is QKSGTGATATV. Residues Arg-75, 104-106, Arg-254, 275-279, and 325-327 contribute to the S-adenosyl-L-methionine site; these read EGF, DMCNH, and SGF. In terms of domain architecture, SET spans 94-314; that stretch reads EGFEMVNFKE…AGEQIYIFYG (221 aa). A Phosphoserine modification is found at Ser-513. Over residues 549-573 the composition is skewed to polar residues; the sequence is ENGLVNGENSIPNGTRSENENLNQE. Residues 549–595 form a disordered region; the sequence is ENGLVNGENSIPNGTRSENENLNQEGSKRAVEDAKGSSSDSTDEVKE. The segment covering 574 to 583 has biased composition (basic and acidic residues); sequence GSKRAVEDAK.

This sequence belongs to the class V-like SAM-binding methyltransferase superfamily. SETD3 actin-histidine methyltransferase family. In terms of assembly, interacts with MYOD1. In terms of processing, phosphorylated by GSK3B, which is required for recognition by the SCF(FBXW7) complex and subsequent degradation. Post-translationally, ubiquitinated by the SCF(FBXW7) complex following phosphorylation by GSK3B, leading to its degradation by the proteasome.

The protein resides in the cytoplasm. The protein localises to the nucleus. The catalysed reaction is L-histidyl-[protein] + S-adenosyl-L-methionine = N(tele)-methyl-L-histidyl-[protein] + S-adenosyl-L-homocysteine + H(+). Its function is as follows. Protein-histidine N-methyltransferase that specifically mediates 3-methylhistidine (tele-methylhistidine) methylation of actin at 'His-73'. Histidine methylation of actin is required for smooth muscle contraction of the laboring uterus during delivery. Does not have protein-lysine N-methyltransferase activity and probably only catalyzes histidine methylation of actin. This Plecturocebus moloch (Dusky titi monkey) protein is Actin-histidine N-methyltransferase.